The chain runs to 464 residues: Cell division protein FtsA (464 aa).

Residues glutamate 392–glutamate 464 form a disordered region. Residues lysine 416–phenylalanine 455 show a composition bias toward basic and acidic residues.

This sequence belongs to the FtsA/MreB family. Self-interacts. Interacts with FtsZ.

The protein localises to the cell membrane. Its function is as follows. Cell division protein that is involved in the assembly of the Z ring. May serve as a membrane anchor for the Z ring. In Staphylococcus epidermidis (strain ATCC 12228 / FDA PCI 1200), this protein is Cell division protein FtsA.